The sequence spans 361 residues: Epi-isozizaene synthase (361 aa).

Residues D99, D103, N240, S244, and E248 each coordinate Mg(2+). The short motif at 99-103 (DDRHD) is the DDXXD motif element.

This sequence belongs to the terpene synthase family. Mg(2+) serves as cofactor. The cofactor is Mn(2+). Fe(3+) is required as a cofactor.

The enzyme catalyses (2E,6E)-farnesyl diphosphate = (+)-epi-isozizaene + diphosphate. It functions in the pathway sesquiterpene biosynthesis; epi-isozizaene biosynthesis. Its function is as follows. Catalyzes the cyclization of farnesyl diphosphate (FPP) to the sesquiterpene epi-isozizaene. In Streptomyces coelicolor (strain ATCC BAA-471 / A3(2) / M145), this protein is Epi-isozizaene synthase (cyc1).